The following is an 89-amino-acid chain: Dynein light chain 2, cytoplasmic (89 aa).

It belongs to the dynein light chain family. In terms of assembly, homodimer. The cytoplasmic dynein 1 complex consists of two catalytic heavy chains (HCs) and a number of non-catalytic subunits which present intermediate chains (ICs), light intermediate chains (LICs) and light chains (LCs); the composition seems to vary in respect to the IC, LIC and LC composition. The heavy chain homodimer serves as a scaffold for the probable homodimeric assembly of the respective non-catalytic subunits. Dynein ICs and LICs bind directly to the HC dimer and the LCs assemble on the IC dimer. Interacts with DYNC1I1. Interacts with BMF. Component of the myosin V motor complex. Interacts with BCAS1. Interacts with Basson/BSN. Interacts with AMBRA1 (via TQT motifs); tethering AMBRA1 to the cytoskeleton. Interacts with IQUB.

It localises to the cytoplasm. Its subcellular location is the cytoskeleton. Its function is as follows. Acts as one of several non-catalytic accessory components of the cytoplasmic dynein 1 complex that are thought to be involved in linking dynein to cargos and to adapter proteins that regulate dynein function. Cytoplasmic dynein 1 acts as a motor for the intracellular retrograde motility of vesicles and organelles along microtubules. May play a role in changing or maintaining the spatial distribution of cytoskeletal structures. The polypeptide is Dynein light chain 2, cytoplasmic (DYNLL2) (Homo sapiens (Human)).